Consider the following 497-residue polypeptide: RNA-splicing ligase RtcB homolog (497 aa).

Residues aspartate 111, cysteine 114, histidine 219, histidine 251, and histidine 345 each contribute to the Mn(2+) site. Residue 218 to 222 (NHYAE) coordinates GMP. GMP is bound by residues 345 to 346 (HN), 394 to 397 (GGTM), serine 401, 420 to 423 (HGAG), and lysine 496. The active-site GMP-histidine intermediate is histidine 420.

This sequence belongs to the RtcB family. In terms of assembly, catalytic component of the tRNA-splicing ligase complex. Mn(2+) serves as cofactor.

It carries out the reaction a 3'-end 3'-phospho-ribonucleotide-RNA + a 5'-end dephospho-ribonucleoside-RNA + GTP = a ribonucleotidyl-ribonucleotide-RNA + GMP + diphosphate. It catalyses the reaction a 3'-end 2',3'-cyclophospho-ribonucleotide-RNA + a 5'-end dephospho-ribonucleoside-RNA + GTP + H2O = a ribonucleotidyl-ribonucleotide-RNA + GMP + diphosphate + H(+). Functionally, catalytic subunit of the tRNA-splicing ligase complex that acts by directly joining spliced tRNA halves to mature-sized tRNAs by incorporating the precursor-derived splice junction phosphate into the mature tRNA as a canonical 3',5'-phosphodiester. May act as an RNA ligase with broad substrate specificity, and may function toward other RNAs. The sequence is that of RNA-splicing ligase RtcB homolog from Monosiga brevicollis (Choanoflagellate).